We begin with the raw amino-acid sequence, 1098 residues long: Probable DNA-directed RNA polymerase (1098 aa).

A compositionally biased stretch (basic and acidic residues) spans proline 1–leucine 24. Residues proline 1 to glutamate 26 form a disordered region. Residues aspartate 663, lysine 750, and aspartate 915 contribute to the active site.

It belongs to the phage and mitochondrial RNA polymerase family.

Its subcellular location is the mitochondrion. It carries out the reaction RNA(n) + a ribonucleoside 5'-triphosphate = RNA(n+1) + diphosphate. Functionally, DNA-dependent RNA polymerase catalyzes the transcription of DNA into RNA using the four ribonucleoside triphosphates as substrates. The sequence is that of Probable DNA-directed RNA polymerase from Zea mays (Maize).